Here is a 221-residue protein sequence, read N- to C-terminus: Histone H1.3 (221 aa).

Residues 1-17 (MSETAPAAPAAPAPVEK) show a composition bias toward low complexity. Residues 1–42 (MSETAPAAPAAPAPVEKTPVKKKAKKTGAAAGKRKASGPPVS) are disordered. An N-acetylserine modification is found at Ser2. At Ser2 the chain carries Phosphoserine. Lys17 is modified (N6-acetyllysine). Thr18 carries the phosphothreonine modification. Residues 20–36 (VKKKAKKTGAAAGKRKA) show a composition bias toward basic residues. N6-(beta-hydroxybutyryl)lysine occurs at positions 33, 35, and 53. Residues 37-110 (SGPPVSELIT…GASGSFKLNK (74 aa)) form the H15 domain. The residue at position 55 (Arg55) is a Citrulline. N6-(beta-hydroxybutyryl)lysine is present on residues Lys65, Lys86, and Lys91. Residues 92 to 221 (GTLVQTKGTG…KAKKAAPRKK (130 aa)) form a disordered region. Ser105 is subject to Phosphoserine; by PKC. Lys107 and Lys141 each carry N6-(beta-hydroxybutyryl)lysine. Basic residues-rich tracts occupy residues 120-141 (KAKKAGAAKAKKPAGAAKKPKK), 150-161 (KTAKKTPKKAKK), 170-187 (KVSKSPKKVKAAKPKKAA), and 194-221 (KAPKAKASKPKASKPKATKAKKAAPRKK).

It belongs to the histone H1/H5 family. In terms of processing, H1 histones are progressively phosphorylated during the cell cycle, becoming maximally phosphorylated during late G2 phase and M phase, and being dephosphorylated sharply thereafter. Hydroxybutyrylation of histones is induced by starvation. Post-translationally, citrullination at Arg-55 (H1R54ci) by PADI4 takes place within the DNA-binding site of H1 and results in its displacement from chromatin and global chromatin decondensation, thereby promoting pluripotency and stem cell maintenance.

Its subcellular location is the nucleus. It localises to the chromosome. Histone H1 protein binds to linker DNA between nucleosomes forming the macromolecular structure known as the chromatin fiber. Histones H1 are necessary for the condensation of nucleosome chains into higher-order structured fibers. Also acts as a regulator of individual gene transcription through chromatin remodeling, nucleosome spacing and DNA methylation. In Mus musculus (Mouse), this protein is Histone H1.3.